The following is a 288-amino-acid chain: Shikimate dehydrogenase (NADP(+)) (288 aa).

Residues 15–17 and threonine 64 each bind shikimate; that span reads SKS. Lysine 68 (proton acceptor) is an active-site residue. Residue glutamate 83 coordinates NADP(+). Positions 92 and 117 each coordinate shikimate. NADP(+)-binding positions include 141–145, 165–170, and methionine 232; these read GAGGA and NRTVSK. Residue tyrosine 234 participates in shikimate binding. Glycine 254 is an NADP(+) binding site.

The protein belongs to the shikimate dehydrogenase family. In terms of assembly, homodimer.

The enzyme catalyses shikimate + NADP(+) = 3-dehydroshikimate + NADPH + H(+). It functions in the pathway metabolic intermediate biosynthesis; chorismate biosynthesis; chorismate from D-erythrose 4-phosphate and phosphoenolpyruvate: step 4/7. Involved in the biosynthesis of the chorismate, which leads to the biosynthesis of aromatic amino acids. Catalyzes the reversible NADPH linked reduction of 3-dehydroshikimate (DHSA) to yield shikimate (SA). This Psychrobacter cryohalolentis (strain ATCC BAA-1226 / DSM 17306 / VKM B-2378 / K5) protein is Shikimate dehydrogenase (NADP(+)).